The sequence spans 817 residues: Putative ATP-dependent RNA helicase R350 (817 aa).

The segment at 1-29 is disordered; the sequence is MNRRNRSNDLNPEPSIENPNNQIAEEFPG. Positions 17 to 29 are enriched in polar residues; that stretch reads ENPNNQIAEEFPG. In terms of domain architecture, Helicase ATP-binding spans 93–271; the sequence is LNPQGPYTSI…ALMFNLLRPG (179 aa). Position 106-113 (106-113) interacts with ATP; the sequence is HGLGSGKT. Positions 206 to 209 match the DEAH box motif; the sequence is DEAH. Residues 495-661 form the Helicase C-terminal domain; sequence LAIAFMTYIS…STDEYVEDQA (167 aa).

The protein belongs to the DEAD box helicase family. DEAH subfamily.

Its subcellular location is the virion. The enzyme catalyses ATP + H2O = ADP + phosphate + H(+). The polypeptide is Putative ATP-dependent RNA helicase R350 (Acanthamoeba polyphaga mimivirus (APMV)).